The chain runs to 360 residues: MNHVILYCRPGFEKECAGEVQDKANKLELFGFPRTKNNTGYVVFEFHQQGDADKFIKLQPFSSLIFARQMFAATKLLTDLPQEDRISPILEAVKGFPRCGELRIETPDTNEAKELLKFCRKFTVPLRQAMRKKDVLYAQDSTWKPVLHVCFIAPGCCFVGYSYTNNNSQFFMGIPRLKFPSDAPSRSTLKLEEAFHVFIPRDEWDERLAPGMWGVDLGACPGGWTYQLVKRSMFVHAIDNGQMAQSLMDTGQVKYHAVDGFKFEPARKNVTWIVCDMIEKPARVAHLMGEWLVKAWAKEAIFNLKLPMKGRYDEVLQDIENLKQYFIKNGMKFELQAKHLYHDREEITVHVRCLDNRSPH.

S-adenosyl-L-methionine-binding positions include S187, C220–G223, D239, D259, and D276. K305 serves as the catalytic Proton acceptor.

Belongs to the class I-like SAM-binding methyltransferase superfamily. RNA methyltransferase RlmE family. RlmM subfamily. Monomer.

It localises to the cytoplasm. The catalysed reaction is cytidine(2498) in 23S rRNA + S-adenosyl-L-methionine = 2'-O-methylcytidine(2498) in 23S rRNA + S-adenosyl-L-homocysteine + H(+). Its function is as follows. Catalyzes the 2'-O-methylation at nucleotide C2498 in 23S rRNA. This chain is Ribosomal RNA large subunit methyltransferase M, found in Photobacterium profundum (strain SS9).